The following is a 173-amino-acid chain: Ribosome maturation factor RimM (173 aa).

The PRC barrel domain maps to aspartate 98–leucine 171.

It belongs to the RimM family. As to quaternary structure, binds ribosomal protein uS19.

Its subcellular location is the cytoplasm. Its function is as follows. An accessory protein needed during the final step in the assembly of 30S ribosomal subunit, possibly for assembly of the head region. Essential for efficient processing of 16S rRNA. May be needed both before and after RbfA during the maturation of 16S rRNA. It has affinity for free ribosomal 30S subunits but not for 70S ribosomes. The sequence is that of Ribosome maturation factor RimM from Leuconostoc mesenteroides subsp. mesenteroides (strain ATCC 8293 / DSM 20343 / BCRC 11652 / CCM 1803 / JCM 6124 / NCDO 523 / NBRC 100496 / NCIMB 8023 / NCTC 12954 / NRRL B-1118 / 37Y).